Reading from the N-terminus, the 610-residue chain is UvrABC system protein C (610 aa).

A GIY-YIG domain is found at His13–Val91. The region spanning Gly201–Val236 is the UVR domain.

Belongs to the UvrC family. In terms of assembly, interacts with UvrB in an incision complex.

The protein localises to the cytoplasm. Functionally, the UvrABC repair system catalyzes the recognition and processing of DNA lesions. UvrC both incises the 5' and 3' sides of the lesion. The N-terminal half is responsible for the 3' incision and the C-terminal half is responsible for the 5' incision. The protein is UvrABC system protein C of Actinobacillus pleuropneumoniae serotype 5b (strain L20).